Here is a 130-residue protein sequence, read N- to C-terminus: Small ribosomal subunit protein uS9 (130 aa).

The interval Arg109 to Arg130 is disordered.

The protein belongs to the universal ribosomal protein uS9 family.

The protein is Small ribosomal subunit protein uS9 of Desulfotalea psychrophila (strain LSv54 / DSM 12343).